Reading from the N-terminus, the 373-residue chain is Putative glutamate--cysteine ligase 2-2 (373 aa).

Belongs to the glutamate--cysteine ligase type 2 family. YbdK subfamily.

It carries out the reaction L-cysteine + L-glutamate + ATP = gamma-L-glutamyl-L-cysteine + ADP + phosphate + H(+). ATP-dependent carboxylate-amine ligase which exhibits weak glutamate--cysteine ligase activity. The polypeptide is Putative glutamate--cysteine ligase 2-2 (Legionella pneumophila (strain Corby)).